The chain runs to 240 residues: Eukaryotic translation initiation factor 3 subunit J (240 aa).

Residues 19 to 95 (KADVNKWAGE…FANMTPEQQL (77 aa)) form a disordered region. Over residues 28–45 (EDEDDVKDNWEDDDEEEE) the composition is skewed to acidic residues. The span at 46-56 (KKDAPKQEDTP) shows a compositional bias: basic and acidic residues. A compositionally biased stretch (basic residues) spans 60–71 (AKPKKAAQQKKL). Coiled-coil stretches lie at residues 63 to 90 (KKAAQQKKLKKEDLERLQREEEEFANMT) and 176 to 235 (SNNI…DYDD). Positions 72–81 (KKEDLERLQR) are enriched in basic and acidic residues.

This sequence belongs to the eIF-3 subunit J family. In terms of assembly, component of the eukaryotic translation initiation factor 3 (eIF-3) complex.

Its subcellular location is the cytoplasm. In terms of biological role, component of the eukaryotic translation initiation factor 3 (eIF-3) complex, which is involved in protein synthesis of a specialized repertoire of mRNAs and, together with other initiation factors, stimulates binding of mRNA and methionyl-tRNAi to the 40S ribosome. The eIF-3 complex specifically targets and initiates translation of a subset of mRNAs involved in cell proliferation. This Anopheles gambiae (African malaria mosquito) protein is Eukaryotic translation initiation factor 3 subunit J.